The sequence spans 581 residues: Proteasome-associated ATPase (581 aa).

The interval 1 to 28 (MTSSDLTQRKGLTMSDSTPDTPRSTPED) is disordered. The segment covering 14–24 (MSDSTPDTPRS) has biased composition (polar residues). The stretch at 27-66 (EDAARRLAVLSAQNERLAQVLGEARGKIVELQQQIEEFAK) forms a coiled coil. ATP is bound at residue 248 to 253 (GCGKTL). Residues 561-581 (GSGRSAAGRTIETATSTGQYL) are disordered. Residues 572–581 (ETATSTGQYL) show a composition bias toward polar residues. The tract at residues 580 to 581 (YL) is docks into pockets in the proteasome alpha-ring.

The protein belongs to the AAA ATPase family. As to quaternary structure, homohexamer. Assembles into a hexameric ring structure that caps the 20S proteasome core. Strongly interacts with the prokaryotic ubiquitin-like protein Pup through a hydrophobic interface; the interacting region of ARC lies in its N-terminal coiled-coil domain. There is one Pup binding site per ARC hexamer ring. Upon ATP-binding, the C-terminus of ARC interacts with the alpha-rings of the proteasome core, possibly by binding to the intersubunit pockets.

Its pathway is protein degradation; proteasomal Pup-dependent pathway. In terms of biological role, ATPase which is responsible for recognizing, binding, unfolding and translocation of pupylated proteins into the bacterial 20S proteasome core particle. May be essential for opening the gate of the 20S proteasome via an interaction with its C-terminus, thereby allowing substrate entry and access to the site of proteolysis. Thus, the C-termini of the proteasomal ATPase may function like a 'key in a lock' to induce gate opening and therefore regulate proteolysis. This chain is Proteasome-associated ATPase, found in Sanguibacter keddieii (strain ATCC 51767 / DSM 10542 / NCFB 3025 / ST-74).